The sequence spans 201 residues: Large ribosomal subunit protein uL18 (201 aa).

The protein belongs to the universal ribosomal protein uL18 family. In terms of assembly, part of the 50S ribosomal subunit. Contacts the 5S and 23S rRNAs.

Its function is as follows. This is one of the proteins that bind and probably mediate the attachment of the 5S RNA into the large ribosomal subunit, where it forms part of the central protuberance. The protein is Large ribosomal subunit protein uL18 of Thermococcus gammatolerans (strain DSM 15229 / JCM 11827 / EJ3).